The primary structure comprises 253 residues: Sugar fermentation stimulation protein homolog (253 aa).

Belongs to the SfsA family.

This chain is Sugar fermentation stimulation protein homolog, found in Chromohalobacter salexigens (strain ATCC BAA-138 / DSM 3043 / CIP 106854 / NCIMB 13768 / 1H11).